The following is a 460-amino-acid chain: UDP-N-acetylmuramoylalanine--D-glutamate ligase (460 aa).

Residue Gly-115–Thr-121 coordinates ATP.

The protein belongs to the MurCDEF family.

It localises to the cytoplasm. It catalyses the reaction UDP-N-acetyl-alpha-D-muramoyl-L-alanine + D-glutamate + ATP = UDP-N-acetyl-alpha-D-muramoyl-L-alanyl-D-glutamate + ADP + phosphate + H(+). It participates in cell wall biogenesis; peptidoglycan biosynthesis. Cell wall formation. Catalyzes the addition of glutamate to the nucleotide precursor UDP-N-acetylmuramoyl-L-alanine (UMA). The chain is UDP-N-acetylmuramoylalanine--D-glutamate ligase from Salinibacter ruber (strain DSM 13855 / M31).